The sequence spans 203 residues: Large ribosomal subunit protein bL25 (203 aa).

Belongs to the bacterial ribosomal protein bL25 family. CTC subfamily. In terms of assembly, part of the 50S ribosomal subunit; part of the 5S rRNA/L5/L18/L25 subcomplex. Contacts the 5S rRNA. Binds to the 5S rRNA independently of L5 and L18.

This is one of the proteins that binds to the 5S RNA in the ribosome where it forms part of the central protuberance. This chain is Large ribosomal subunit protein bL25, found in Wolbachia pipientis subsp. Culex pipiens (strain wPip).